The sequence spans 635 residues: UvrABC system protein C (635 aa).

Residues 1-14 (MAQNHMSETMNDIS) are compositionally biased toward polar residues. A disordered region spans residues 1–27 (MAQNHMSETMNDISAESPDQPEPPRTG). Residues 40 to 117 (SSPGVYRMLD…IKQLKPKYNV (78 aa)) form the GIY-YIG domain. Residues 227–262 (TKIQEELGAEMQAASEAMEYERAAALRDRIKALTQV) enclose the UVR domain.

It belongs to the UvrC family. Interacts with UvrB in an incision complex.

The protein resides in the cytoplasm. In terms of biological role, the UvrABC repair system catalyzes the recognition and processing of DNA lesions. UvrC both incises the 5' and 3' sides of the lesion. The N-terminal half is responsible for the 3' incision and the C-terminal half is responsible for the 5' incision. This chain is UvrABC system protein C, found in Ruegeria sp. (strain TM1040) (Silicibacter sp.).